The following is a 719-amino-acid chain: Serine/threonine-protein kinase PAK 5 (719 aa).

5 disordered regions span residues 1–28 (MFGKKKKKIEISGPSNFEHRVHTGFDPQ), 96–118 (RSNSLRKESPPTPDQGAASRIQG), 226–245 (SPLDYSFQLTPSRTAGTSRC), 253–298 (SESD…PMMP), and 339–372 (VFSPPLSGSDTYPRGPTKLPQSQSKAGYSSGSHQ). The 14-residue stretch at 11–24 (ISGPSNFEHRVHTG) folds into the CRIB domain. The linker stretch occupies residues 25–448 (FDPQEQKFTG…VVSPGDPREY (424 aa)). S104 is subject to Phosphoserine. At T107 the chain carries Phosphothreonine. Over residues 226–244 (SPLDYSFQLTPSRTAGTSR) the composition is skewed to polar residues. The span at 357-372 (LPQSQSKAGYSSGSHQ) shows a compositional bias: polar residues. In terms of domain architecture, Protein kinase spans 449-700 (LDNFIKIGEG…AQELLGHPFL (252 aa)). ATP is bound by residues 455 to 463 (IGEGSTGIV) and K478. Residue D568 is the Proton acceptor of the active site.

It belongs to the protein kinase superfamily. STE Ser/Thr protein kinase family. STE20 subfamily. In terms of assembly, interacts tightly with GTP-bound but not GDP-bound CDC42/p21 and RAC1. Interacts with MARK2, leading to inhibit MARK2 independently of kinase activity. Interacts with RHOD and RHOH. Post-translationally, autophosphorylated when activated by CDC42/p21. As to expression, highly expressed in brain and eye. Also expressed in adrenal gland, pancreas, prostate and testes. Within the brain, expression is restricted to neurons. Present in brain but not in kidney, lung and spleen (at protein level).

Its subcellular location is the mitochondrion. It localises to the cytoplasm. It is found in the nucleus. The catalysed reaction is L-seryl-[protein] + ATP = O-phospho-L-seryl-[protein] + ADP + H(+). It carries out the reaction L-threonyl-[protein] + ATP = O-phospho-L-threonyl-[protein] + ADP + H(+). Serine/threonine protein kinase that plays a role in a variety of different signaling pathways including cytoskeleton regulation, cell migration, proliferation or cell survival. Activation by various effectors including growth factor receptors or active CDC42 and RAC1 results in a conformational change and a subsequent autophosphorylation on several serine and/or threonine residues. Phosphorylates the proto-oncogene RAF1 and stimulates its kinase activity. Promotes cell survival by phosphorylating the BCL2 antagonist of cell death BAD. Phosphorylates CTNND1, probably to regulate cytoskeletal organization and cell morphology. Keeps microtubules stable through MARK2 inhibition and destabilizes the F-actin network leading to the disappearance of stress fibers and focal adhesions. This is Serine/threonine-protein kinase PAK 5 from Mus musculus (Mouse).